The sequence spans 204 residues: Ribosome maturation factor RimM (204 aa).

The PRC barrel domain occupies 117 to 192 (DEDEFFSADL…EVTIDPPDDL (76 aa)).

The protein belongs to the RimM family. Binds ribosomal protein uS19.

It localises to the cytoplasm. In terms of biological role, an accessory protein needed during the final step in the assembly of 30S ribosomal subunit, possibly for assembly of the head region. Essential for efficient processing of 16S rRNA. May be needed both before and after RbfA during the maturation of 16S rRNA. It has affinity for free ribosomal 30S subunits but not for 70S ribosomes. The protein is Ribosome maturation factor RimM of Methylobacterium nodulans (strain LMG 21967 / CNCM I-2342 / ORS 2060).